The following is a 4834-amino-acid chain: E3 ubiquitin-protein ligase HERC2 (4834 aa).

The interval 50–88 is disordered; it reads TESTQNGELPPRKDDSVEPSGTKKEDLNDKEKKDEEETP. Positions 59-84 are enriched in basic and acidic residues; that stretch reads PPRKDDSVEPSGTKKEDLNDKEKKDE. T272 carries the post-translational modification Phosphothreonine. The RCC1 1-1 repeat unit spans residues 415 to 461; the sequence is PTSHKGSLQEVIGWGLIGWKYYANVIGPIQCEGLANLGVTQIACAEK. Residues 462-512 form an RCC1 1-2 repeat; that stretch reads RFLILSRNGRVYTQAYNSDTLAPQLVQGLASRNIVKIAAHSDGHHYLALAA. Residues 513-568 form an RCC1 1-3 repeat; the sequence is TGEVYSWGCGDGGRLGHGDTVPLEEPKVISAFSGKQAGKHVVHIACGSTYSAAITA. The RCC1 1-4 repeat unit spans residues 569–620; that stretch reads EGELYTWGRGNYGRLGHGSSEDEAIPMLVAGLKGLKVIDVACGSGDAQTLAV. The RCC1 1-5 repeat unit spans residues 623-674; it reads NGQVWSWGDGDYGKLGRGGSDGCKTPKLIEKLQDLDVVKVRCGSQFSIALTK. At T647 the chain carries Phosphothreonine. Residues 675 to 726 form an RCC1 1-6 repeat; it reads DGQVYSWGKGDNQRLGHGTEEHVRYPKLLEGLQGKKVIDVAAGSTHCLALTE. The RCC1 1-7 repeat unit spans residues 728 to 778; it reads SEVHSWGSNDQCQHFDTLRVTKPEPAALPGLDTKHIVGIACGPAQSFAWSS. Residues 948–980 are a coiled coil; it reads LHAAITAEIQDIEAKKEAQKEKEIDEQEANAST. The region spanning 1207 to 1283 is the Cytochrome b5 heme-binding domain; that stretch reads VTLIRKADLE…MHAFCVGQYL (77 aa). A disordered region spans residues 1555-1575; that stretch reads RKKRVPKKPESTDDEEKIGNE. The span at 1566 to 1575 shows a compositional bias: acidic residues; sequence TDDEEKIGNE. S1577 carries the phosphoserine modification. The region spanning 1859–1932 is the MIB/HERC2 domain; sequence SGPELAAMMK…KYDLKLAELP (74 aa). A disordered region spans residues 1933-1958; the sequence is AAAQPSAEDSDTEDDSEAEQTERNIH. Over residues 1940–1951 the composition is skewed to acidic residues; sequence EDSDTEDDSEAE. S1942 carries the phosphoserine modification. Position 1944 is a phosphothreonine (T1944). S2454 carries the phosphoserine modification. In terms of domain architecture, CPH spans 2554 to 2630; sequence RADFLSNDDY…RYIHVELIGY (77 aa). Residues 2703–2755 form a ZZ-type zinc finger; that stretch reads HPGVTCDGCQMFPINGSRFKCRNCDDFDFCETCFKTKKHNTRHTFGRINEPGQ. Residues C2708, C2711, C2723, C2726, C2732, C2735, H2741, and H2745 each contribute to the Zn(2+) site. The region spanning 2759-2936 is the DOC domain; that stretch reads FCGRSGKQLK…ASDNEEEEDE (178 aa). S2928 carries the phosphoserine modification. One copy of the RCC1 2-1 repeat lies at 2958–3009; sequence RTKVFVWGLNDKDQLGGLKGSKIKVPSFSETLSALNVVQVAGGSKSLFAVTV. The stretch at 3010-3064 is one RCC1 2-2 repeat; sequence EGKVYACGEATNGRLGLGISSGTVPIPRQITALSSYVVKKVAVHSGGRHATALTV. The RCC1 2-3 repeat unit spans residues 3065–3116; the sequence is DGKVFSWGEGDDGKLGHFSRMNCDKPRLIEALKTKRIRDIACGSSHSAALTS. Residues 3118-3168 form an RCC1 2-4 repeat; it reads GELYTWGLGEYGRLGHGDNTTQLKPKMVKVLLGHRVIQVACGSRDAQTLAL. The RCC1 2-5 repeat unit spans residues 3171–3222; that stretch reads EGLVFSWGDGDFGKLGRGGSEGCNIPQNIERLNGQGVCQIECGAQFSLALTK. The RCC1 2-6 repeat unit spans residues 3224–3274; that stretch reads GVVWTWGKGDYFRLGHGSDVHVRKPQVVEGLRGKKIVHVAVGALHCLAVTD. The RCC1 2-7 repeat unit spans residues 3275–3326; sequence SGQVYAWGDNDHGQQGNGTTTVNRKPTLVQGLEGQKITRVACGSSHSVAWTT. Composition is skewed to polar residues over residues 3602–3611 and 3618–3629; these read SQSGRLSSQP and HPYTDDTSTSGT. The tract at residues 3602-3629 is disordered; that stretch reads SQSGRLSSQPVVVESSHPYTDDTSTSGT. Residues 3951–4002 form an RCC1 3-1 repeat; the sequence is SGTIYGWGHNHRGQLGGIEGAKVKVPTPCEALATLRPVQLIGGEQTLFAVTA. An RCC1 3-2 repeat occupies 4004 to 4056; that stretch reads GKLYATGYGAGGRLGIGGTESVSTPTLLESIQHVFIKKVAVNSGGKHCLALSS. Residues 4058-4108 form an RCC1 3-3 repeat; it reads GEVYSWGEAEDGKLGHGNRSPCDRPRVIESLRGIEVVDVAAGGAHSACVTA. Residues 4110–4162 form an RCC1 3-4 repeat; that stretch reads GDLYTWGKGRYGRLGHSDSEDQLKPKLVEALQGHRVVDIACGSGDAQTLCLTD. An RCC1 3-5 repeat occupies 4164 to 4214; the sequence is DTVWSWGDGDYGKLGRGGSDGCKVPMKIDSLTGLGVVKVECGSQFSVALTK. An RCC1 3-6 repeat occupies 4216 to 4266; the sequence is GAVYTWGKGDYHRLGHGSDDHVRRPRQVQGLQGKKVIAIATGSLHCVCCTE. Residues 4268–4318 form an RCC1 3-7 repeat; that stretch reads GEVYTWGDNDEGQLGDGTTNAIQRPRLVAALQGKKVNRVACGSAHTLAWST. Residues 4457 to 4794 enclose the HECT domain; that stretch reads DSLLLPHRVW…IHFCKSIDTD (338 aa). The Glycyl thioester intermediate role is filled by C4762. The segment at 4804–4834 is disordered; it reads EPAADDSSDDSDNEDVDSFASDSTQDYLTGH. The segment covering 4806 to 4820 has biased composition (acidic residues); it reads AADDSSDDSDNEDVD. 3 positions are modified to phosphoserine: S4810, S4811, and S4814. Residues 4823–4834 show a composition bias toward polar residues; the sequence is ASDSTQDYLTGH. Position 4827 is a phosphothreonine (T4827).

Interacts (when phosphorylated at Thr-4827 and sumoylated) with RNF8 (via FHA domain); this interaction increases after ionizing radiation (IR) treatment. Interacts with XPA. Interacts with NEURL4. Via its interaction with NEURL4, may indirectly interact with CCP110 and CEP97. Phosphorylation at Thr-4827 is required for interaction with RNF8. Post-translationally, sumoylated with SUMO1 by PIAS4 in response to double-strand breaks (DSBs), promoting the interaction with RNF8.

It is found in the cytoplasm. The protein localises to the cytoskeleton. It localises to the microtubule organizing center. Its subcellular location is the centrosome. The protein resides in the centriole. It is found in the nucleus. It catalyses the reaction S-ubiquitinyl-[E2 ubiquitin-conjugating enzyme]-L-cysteine + [acceptor protein]-L-lysine = [E2 ubiquitin-conjugating enzyme]-L-cysteine + N(6)-ubiquitinyl-[acceptor protein]-L-lysine.. It participates in protein modification; protein ubiquitination. Functionally, E3 ubiquitin-protein ligase that regulates ubiquitin-dependent retention of repair proteins on damaged chromosomes. Recruited to sites of DNA damage in response to ionizing radiation (IR) and facilitates the assembly of UBE2N and RNF8 promoting DNA damage-induced formation of 'Lys-63'-linked ubiquitin chains. Acts as a mediator of binding specificity between UBE2N and RNF8. Involved in the maintenance of RNF168 levels. E3 ubiquitin-protein ligase that promotes the ubiquitination and proteasomal degradation of XPA which influences the circadian oscillation of DNA excision repair activity. By controlling the steady-state expression of the IGF1R receptor, indirectly regulates the insulin-like growth factor receptor signaling pathway. Also modulates iron metabolism by regulating the basal turnover of FBXL5. The chain is E3 ubiquitin-protein ligase HERC2 from Homo sapiens (Human).